A 459-amino-acid polypeptide reads, in one-letter code: MSSAIKEVQGAPVKWVTNWTPEAIRGLVDQEKGLLDPRIYADQSLYELELERVFGRSWLLLGHESHVPETGDFLATYMGEDPVVMVRQKDKSIKVFLNQCRHRGMRICRSDAGNAKAFTCSYHGWAYDIAGKLVNVPFEKEAFCDKKEGDCGFDKAEWGPLQARVATYKGLVFANWDVQAPDLETYLGDARPYMDVMLDRTPAGTVAIGGMQKWVIPCNWKFAAEQFCSDMYHAGTTTHLSGILAGIPPEMDLSQAQIPTKGNQFRAAWGGHGSGWYVDEPGSLLAVMGPKVTQYWTEGPAAELAEQRLGHTGMPVRRMVGQHMTIFPTCSFLPTFNNIRIWHPRGPNEIEVWAFTLVDADAPAEIKEEYRRHNIRNFSAGGVFEQDDGENWVEIQKGLRGYKAKSQPLNAQMGLGRSQTGHPDFPGNVGYVYAEEAARGMYHHWMRMMSEPSWATLKP.

The region spanning 58-156 (WLLLGHESHV…KEGDCGFDKA (99 aa)) is the Rieske domain. Cys-100, His-102, Cys-120, and His-123 together coordinate [2Fe-2S] cluster. 2 residues coordinate Fe cation: His-233 and His-239.

This sequence belongs to the bacterial ring-hydroxylating dioxygenase alpha subunit family. Heterohexamer consisting of three BphA subunits and three BphE subunits. A ferredoxin (BphF) and a ferredoxin reductase (BphG) must be present to obtain activity. [2Fe-2S] cluster is required as a cofactor. Fe cation serves as cofactor.

It catalyses the reaction biphenyl + NADH + O2 + H(+) = (2R,3S)-3-phenylcyclohexa-3,5-diene-1,2-diol + NAD(+). The protein operates within xenobiotic degradation; biphenyl degradation; 2-hydroxy-2,4-pentadienoate and benzoate from biphenyl: step 1/4. This chain is Biphenyl dioxygenase subunit alpha (bphA), found in Paraburkholderia xenovorans (strain LB400).